A 162-amino-acid chain; its full sequence is 2-C-methyl-D-erythritol 2,4-cyclodiphosphate synthase (162 aa).

Positions 9 and 11 each coordinate a divalent metal cation. 4-CDP-2-C-methyl-D-erythritol 2-phosphate-binding positions include 9-11 (DVH) and 37-38 (HS). Position 45 (His-45) interacts with a divalent metal cation.

Belongs to the IspF family. As to quaternary structure, homotrimer. A divalent metal cation serves as cofactor.

It catalyses the reaction 4-CDP-2-C-methyl-D-erythritol 2-phosphate = 2-C-methyl-D-erythritol 2,4-cyclic diphosphate + CMP. It functions in the pathway isoprenoid biosynthesis; isopentenyl diphosphate biosynthesis via DXP pathway; isopentenyl diphosphate from 1-deoxy-D-xylulose 5-phosphate: step 4/6. Functionally, involved in the biosynthesis of isopentenyl diphosphate (IPP) and dimethylallyl diphosphate (DMAPP), two major building blocks of isoprenoid compounds. Catalyzes the conversion of 4-diphosphocytidyl-2-C-methyl-D-erythritol 2-phosphate (CDP-ME2P) to 2-C-methyl-D-erythritol 2,4-cyclodiphosphate (ME-CPP) with a corresponding release of cytidine 5-monophosphate (CMP). This Petrotoga mobilis (strain DSM 10674 / SJ95) protein is 2-C-methyl-D-erythritol 2,4-cyclodiphosphate synthase.